A 279-amino-acid polypeptide reads, in one-letter code: Ribosomal RNA small subunit methyltransferase J (279 aa).

Residues 138-139 (ER) and D194 each bind S-adenosyl-L-methionine.

Belongs to the methyltransferase superfamily. RsmJ family.

It localises to the cytoplasm. The enzyme catalyses guanosine(1516) in 16S rRNA + S-adenosyl-L-methionine = N(2)-methylguanosine(1516) in 16S rRNA + S-adenosyl-L-homocysteine + H(+). Specifically methylates the guanosine in position 1516 of 16S rRNA. The polypeptide is Ribosomal RNA small subunit methyltransferase J (Acinetobacter baumannii (strain ATCC 17978 / DSM 105126 / CIP 53.77 / LMG 1025 / NCDC KC755 / 5377)).